We begin with the raw amino-acid sequence, 266 residues long: MDKNGPIGIIDSGVGGITVLKRLLEILPEEDYIYFGDTLRVPYGNRPKEEIEKFTREIVNYLKKQKVKAVVIACNTICSSINKNDYEILMFGILEAGIKSAVEATSNGRIGVIATKRTVESEAYLKGIKRLNRNAMVFQKACPELVLIVENGFYEASSIYSAVKKCTEEFLEKDIDTLVLGCTHFPILLPFIERVVDNKVTVVDPAIKLAHEVKKYLVENNLVKDKKGGQIRFLVTGEKENFIKVAGTFLNDKHIDVLRIAIEELK.

Substrate contacts are provided by residues 11 to 12 and 43 to 44; these read DS and YG. Cysteine 74 (proton donor/acceptor) is an active-site residue. A substrate-binding site is contributed by 75 to 76; sequence NT. The active-site Proton donor/acceptor is cysteine 182. Substrate is bound at residue 183 to 184; the sequence is TH.

This sequence belongs to the aspartate/glutamate racemases family.

The enzyme catalyses L-glutamate = D-glutamate. It participates in cell wall biogenesis; peptidoglycan biosynthesis. Its function is as follows. Provides the (R)-glutamate required for cell wall biosynthesis. The chain is Glutamate racemase 1 from Caldanaerobacter subterraneus subsp. tengcongensis (strain DSM 15242 / JCM 11007 / NBRC 100824 / MB4) (Thermoanaerobacter tengcongensis).